Here is a 59-residue protein sequence, read N- to C-terminus: UPF0181 protein YoaH (59 aa).

Belongs to the UPF0181 family.

The chain is UPF0181 protein YoaH from Escherichia coli O127:H6 (strain E2348/69 / EPEC).